Reading from the N-terminus, the 271-residue chain is Small ribosomal subunit protein uS3 (271 aa).

Positions 40-108 (IRKFLKKRLY…TIIVNIVEVR (69 aa)) constitute a KH type-2 domain. The tract at residues 210 to 271 (PTRDGVNPRE…RPQRTENKGN (62 aa)) is disordered. The segment covering 215 to 247 (VNPREESRKSDRRDNKRDNRRNDRRGNDRRGND) has biased composition (basic and acidic residues).

Belongs to the universal ribosomal protein uS3 family. Part of the 30S ribosomal subunit. Forms a tight complex with proteins S10 and S14.

In terms of biological role, binds the lower part of the 30S subunit head. Binds mRNA in the 70S ribosome, positioning it for translation. The sequence is that of Small ribosomal subunit protein uS3 from Clostridioides difficile (strain 630) (Peptoclostridium difficile).